Consider the following 98-residue polypeptide: Large ribosomal subunit protein uL23 (98 aa).

Belongs to the universal ribosomal protein uL23 family. As to quaternary structure, part of the 50S ribosomal subunit. Contacts protein L29, and trigger factor when it is bound to the ribosome.

In terms of biological role, one of the early assembly proteins it binds 23S rRNA. One of the proteins that surrounds the polypeptide exit tunnel on the outside of the ribosome. Forms the main docking site for trigger factor binding to the ribosome. The polypeptide is Large ribosomal subunit protein uL23 (Rickettsia canadensis (strain McKiel)).